The sequence spans 429 residues: MNLPPDALHENVYAFALARDQVESYCNQCLTSMAELKKCSACRRLAYCSQECQRADWKLHKVECKAIKTHNEVANDSIRLVMRIAGKLSRNEDGEIEAYYIPGVARNFQNLEHHPSSYDADEESFVKEYFQFAIAPHPDRDLIKLIFQKVSINSFVVGNSTGNPIGVGLCIKLSAANHSCKPLTRVCYRNRTAMLVPVSSELPSTLEGACHSYIDELMPRDMRRDTLKKKYKFLCQCDGCLDEDRNARMEAWTCGICVKGWMRNKENGQCELCGWTMSKDHFELCRTAEEAGIAARSRLANDAIPLETKRNLCEKLLDLFQDTLHDHNVHRIPVLRCLYICSLAAQNITAAAKTGGTLLSIMLVYQNTTDPAILFQKYQLAQLFCAAGAKTQATKLLQEIEEPLEKIYTPDSMICRNVYCMILKARNLS.

C26, C29, C39, C42, C48, C52, H60, and C64 together coordinate Zn(2+). The segment at 26–64 (CNQCLTSMAELKKCSACRRLAYCSQECQRADWKLHKVEC) adopts an MYND-type zinc-finger fold.

The protein localises to the nucleus. The protein is SET domain-containing protein 14 (set-14) of Caenorhabditis elegans.